The following is a 357-amino-acid chain: tRNA-specific 2-thiouridylase MnmA (357 aa).

ATP is bound by residues 7 to 14 (GLSGGVDS) and Leu33. Cys94 acts as the Nucleophile in catalysis. Residues Cys94 and Cys193 are joined by a disulfide bond. ATP is bound at residue Gly119. The interval 143-145 (KDQ) is interaction with tRNA. Cys193 functions as the Cysteine persulfide intermediate in the catalytic mechanism. The interval 298 to 299 (RY) is interaction with tRNA.

The protein belongs to the MnmA/TRMU family.

The protein resides in the cytoplasm. The catalysed reaction is S-sulfanyl-L-cysteinyl-[protein] + uridine(34) in tRNA + AH2 + ATP = 2-thiouridine(34) in tRNA + L-cysteinyl-[protein] + A + AMP + diphosphate + H(+). Catalyzes the 2-thiolation of uridine at the wobble position (U34) of tRNA, leading to the formation of s(2)U34. The protein is tRNA-specific 2-thiouridylase MnmA of Synechococcus sp. (strain ATCC 27144 / PCC 6301 / SAUG 1402/1) (Anacystis nidulans).